We begin with the raw amino-acid sequence, 430 residues long: Dihydroorotase (430 aa).

Zn(2+) is bound by residues histidine 61 and histidine 63. Substrate is bound by residues 63–65 (HLR) and asparagine 95. Residues aspartate 153, histidine 180, and histidine 233 each contribute to the Zn(2+) site. Asparagine 279 lines the substrate pocket. Aspartate 306 contributes to the Zn(2+) binding site. The active site involves aspartate 306. Substrate is bound by residues histidine 310 and 324–325 (FG).

It belongs to the metallo-dependent hydrolases superfamily. DHOase family. Class I DHOase subfamily. It depends on Zn(2+) as a cofactor.

It carries out the reaction (S)-dihydroorotate + H2O = N-carbamoyl-L-aspartate + H(+). It participates in pyrimidine metabolism; UMP biosynthesis via de novo pathway; (S)-dihydroorotate from bicarbonate: step 3/3. Functionally, catalyzes the reversible cyclization of carbamoyl aspartate to dihydroorotate. The polypeptide is Dihydroorotase (Lactiplantibacillus plantarum (strain ATCC BAA-793 / NCIMB 8826 / WCFS1) (Lactobacillus plantarum)).